A 445-amino-acid polypeptide reads, in one-letter code: FAS-associated factor 2-A (445 aa).

Residues 12–53 (EQTEKLLQFQDLTGIESMDQCRQTLQQHNWNIEAAVQDRLNE) enclose the UBA domain. Residues 275–353 (SERLEREERN…ERKSECLPAE (79 aa)) adopt a coiled-coil conformation. The interval 302 to 354 (RADQEKERKKKEKQEQKRREEEEAQRKQMLEERKKRNLEEEKERKSECLPAEP) is disordered. A compositionally biased stretch (basic and acidic residues) spans 303–348 (ADQEKERKKKEKQEQKRREEEEAQRKQMLEERKKRNLEEEKERKSE). A UBX domain is found at 357-439 (DHPDNVKIIF…GLSQSQLLFV (83 aa)).

It localises to the cytoplasm. The protein resides in the lipid droplet. It is found in the endoplasmic reticulum. Plays an important role in endoplasmic reticulum-associated degradation (ERAD) that mediates ubiquitin-dependent degradation of misfolded endoplasmic reticulum proteins. Involved in inhibition of lipid droplet degradation. Involved in stress granule disassembly. This Xenopus laevis (African clawed frog) protein is FAS-associated factor 2-A (faf2-a).